The chain runs to 1120 residues: TBC1 domain family member 8B (1120 aa).

2 consecutive GRAM domains span residues 145–212 and 285–353; these read LKFE…EKTS and EQFN…DKTN. The 188-residue stretch at 487–674 folds into the Rab-GAP TBC domain; the sequence is GIPETLRGEL…NVVDCFFYDG (188 aa). The EF-hand domain maps to 858 to 893; that stretch reads NKDSLALWTFRLLDENSDCLINFKEFSSAIDIMYNG. A disordered region spans residues 1035 to 1066; that stretch reads SPTSSAKGFSGTVCGSGGPSEEKTGSHLEKDP. The segment covering 1054-1066 has biased composition (basic and acidic residues); that stretch reads SEEKTGSHLEKDP.

In terms of assembly, interacts (via domain Rab-GAP TBC) with RAB11B (in GTP-bound form). In terms of tissue distribution, kidney (at protein level).

It is found in the cytoplasm. The protein resides in the cytosol. Functionally, involved in vesicular recycling, probably as a RAB11B GTPase-activating protein. This is TBC1 domain family member 8B (TBC1D8B) from Homo sapiens (Human).